The sequence spans 164 residues: Protein-export protein SecB (164 aa).

This sequence belongs to the SecB family. As to quaternary structure, homotetramer, a dimer of dimers. One homotetramer interacts with 1 SecA dimer.

Its subcellular location is the cytoplasm. One of the proteins required for the normal export of preproteins out of the cell cytoplasm. It is a molecular chaperone that binds to a subset of precursor proteins, maintaining them in a translocation-competent state. It also specifically binds to its receptor SecA. The protein is Protein-export protein SecB of Caulobacter sp. (strain K31).